The sequence spans 378 residues: Alginate lyase (378 aa).

A signal peptide spans 1–28 (MQTPKLIRPTLLSMAILSSMAWATGASA). Residues 67–68 (SK), 140–141 (HT), and Tyr-258 each bind substrate.

Belongs to the polysaccharide lyase 5 family.

It is found in the periplasm. It carries out the reaction Eliminative cleavage of alginate to give oligosaccharides with 4-deoxy-alpha-L-erythro-hex-4-enuronosyl groups at their non-reducing ends and beta-D-mannuronate at their reducing end.. Its activity is regulated as follows. The monovalent cation sodium enhances activity but is not absolutely required. Its function is as follows. Catalyzes the depolymerization of alginate by cleaving the beta-1,4 glycosidic bond between two adjacent sugar residues via a beta-elimination mechanism. Degrades deacetylated polymannuronate (polyM) alginate from P.aeruginosa more efficiently than non-deacetylated polyM and alginate from M.pyrifera. AlgL from P.syringae also degrades its own alginate, which may indicate a role in cleaving preformed alginate and/or in determining the length of the alginate polymer. May serve to degrade mislocalized alginate that is trapped in the periplasmic space. This chain is Alginate lyase, found in Pseudomonas syringae pv. syringae.